The primary structure comprises 190 residues: MADSIIQSPDLGDVTGYLRERIRTVPDWPQPGVMFRDITPLLQDPKTLRVLIDVFVHRYMDAQLDLVAGIDARGFILGAIVAYELNLGFVPIRKKGKLPFQTVAEEYELEYGSATVEIHADACKTGDRVLLVDDLIATGGTMMAGRKLLERLGATVVEGAAIVDLPELGGSKLLHGAGLPLFTVCKFEGH.

It belongs to the purine/pyrimidine phosphoribosyltransferase family. In terms of assembly, homodimer.

It localises to the cytoplasm. It catalyses the reaction AMP + diphosphate = 5-phospho-alpha-D-ribose 1-diphosphate + adenine. The protein operates within purine metabolism; AMP biosynthesis via salvage pathway; AMP from adenine: step 1/1. Functionally, catalyzes a salvage reaction resulting in the formation of AMP, that is energically less costly than de novo synthesis. The polypeptide is Adenine phosphoribosyltransferase (Cupriavidus taiwanensis (strain DSM 17343 / BCRC 17206 / CCUG 44338 / CIP 107171 / LMG 19424 / R1) (Ralstonia taiwanensis (strain LMG 19424))).